Reading from the N-terminus, the 683-residue chain is Elongation factor G 1 (683 aa).

Residues 3-278 (DKMRNIGIMA…AVVDFLPAPN (276 aa)) form the tr-type G domain. GTP is bound by residues 12-19 (AHIDAGKT), 76-80 (DTPGH), and 130-133 (NKMD).

It belongs to the TRAFAC class translation factor GTPase superfamily. Classic translation factor GTPase family. EF-G/EF-2 subfamily.

It localises to the cytoplasm. In terms of biological role, catalyzes the GTP-dependent ribosomal translocation step during translation elongation. During this step, the ribosome changes from the pre-translocational (PRE) to the post-translocational (POST) state as the newly formed A-site-bound peptidyl-tRNA and P-site-bound deacylated tRNA move to the P and E sites, respectively. Catalyzes the coordinated movement of the two tRNA molecules, the mRNA and conformational changes in the ribosome. The chain is Elongation factor G 1 from Treponema denticola (strain ATCC 35405 / DSM 14222 / CIP 103919 / JCM 8153 / KCTC 15104).